The chain runs to 2465 residues: Protein DOP1A (2465 aa).

Disordered stretches follow at residues 559–600, 625–646, and 705–733; these read PSGQ…SSES, GAAA…TVGS, and TEHQ…KEKN. Residues 633–646 are compositionally biased toward low complexity; sequence STSSETETASTVGS. The segment covering 707 to 733 has biased composition (basic and acidic residues); the sequence is HQGDLGREQGETSKWDRNSQGDVKEKN. A Phosphoserine modification is found at Ser-1266. Basic and acidic residues-rich tracts occupy residues 1282 to 1291 and 1305 to 1315; these read EKETIVKESG and KKDDDKKKSSN. The segment at 1282-1315 is disordered; that stretch reads EKETIVKESGKQPGAKPKVKLARKKDDDKKKSSN.

Belongs to the DOP1 family.

It localises to the golgi apparatus membrane. Functionally, may be involved in protein traffic between late Golgi and early endosomes. This is Protein DOP1A from Homo sapiens (Human).